The primary structure comprises 295 residues: HTH-type transcriptional regulator TrpI (295 aa).

Positions 6–63 (PSLNALRAFEAAARLHSISLAAEELHVTHGAVSRQVRLLEDDLGVALFGKDGRGVKLT) constitute an HTH lysR-type domain. Positions 23 to 42 (ISLAAEELHVTHGAVSRQVR) form a DNA-binding region, H-T-H motif.

The protein belongs to the LysR transcriptional regulatory family. Homotetramer.

Its function is as follows. Activates the expression of the trpBA genes, which encode the two tryptophan synthase subunits, and represses initiation at its own promoter. Acts by binding to two adjacent sites in the intergenic region. In the absence of the inducer indoleglycerol phosphate (InGP), TrpI binds to site I. In the presence of InGP, TrpI binds to site I and site II. Binding to site II is site I dependent. InGP strongly stimulates binding to site II and is required for maximal activation of trpBA. The polypeptide is HTH-type transcriptional regulator TrpI (Pseudomonas aeruginosa (strain ATCC 15692 / DSM 22644 / CIP 104116 / JCM 14847 / LMG 12228 / 1C / PRS 101 / PAO1)).